Reading from the N-terminus, the 191-residue chain is Cdc42 homolog (191 aa).

10-17 (GDGAVGKT) contacts GTP. The short motif at 32 to 40 (YVPTVFDNY) is the Effector region element. GTP-binding positions include 57 to 61 (DTAGQ) and 115 to 118 (TQID). Cysteine 188 carries the post-translational modification Cysteine methyl ester. Cysteine 188 carries the S-geranylgeranyl cysteine lipid modification. A propeptide spans 189 to 191 (KFL) (removed in mature form).

It belongs to the small GTPase superfamily. Rho family. CDC42 subfamily.

The protein localises to the cell junction. It is found in the adherens junction. It localises to the cell membrane. It carries out the reaction GTP + H2O = GDP + phosphate + H(+). Functionally, regulates mbt kinase activity and is also required to recruit mbt to adherens junctions. Together with mbt, regulates photoreceptor cell morphogenesis. This chain is Cdc42 homolog, found in Drosophila pseudoobscura pseudoobscura (Fruit fly).